Reading from the N-terminus, the 621-residue chain is Bifunctional 3'-phosphoadenosine 5'-phosphosulfate synthase 2 (621 aa).

The adenylyl-sulfate kinase stretch occupies residues 1 to 216; sequence MSANFKMNHK…VVELLQEQNI (216 aa). Residue 53 to 58 participates in ATP binding; it reads GAGKTT. Adenosine 5'-phosphosulfate-binding positions include 80-83, Phe92, 97-100, 123-124, Lys162, and 175-176; these read DNVR, REEN, IS, and GF. Residues Ser198, 415–418, 517–521, and Ala559 contribute to the ATP site; these read QLRN and GRDPA. Positions 225–621 are sulfate adenylyltransferase; that stretch reads IHELFVPENK…DYYRSLEKTN (397 aa).

This sequence in the N-terminal section; belongs to the APS kinase family. It in the C-terminal section; belongs to the sulfate adenylyltransferase family. In terms of tissue distribution, expressed in liver, cartilage, skin and brain.

It catalyses the reaction sulfate + ATP + H(+) = adenosine 5'-phosphosulfate + diphosphate. It carries out the reaction adenosine 5'-phosphosulfate + ATP = 3'-phosphoadenylyl sulfate + ADP + H(+). Its pathway is sulfur metabolism; sulfate assimilation. Bifunctional enzyme with both ATP sulfurylase and APS kinase activity, which mediates two steps in the sulfate activation pathway. The first step is the transfer of a sulfate group to ATP to yield adenosine 5'-phosphosulfate (APS), and the second step is the transfer of a phosphate group from ATP to APS yielding 3'-phosphoadenylylsulfate/PAPS, the activated sulfate donor used by sulfotransferases. In mammals, PAPS is the sole source of sulfate while APS appears to only be an intermediate in the sulfate-activation pathway. May have an important role in skeletogenesis during postnatal growth. The sequence is that of Bifunctional 3'-phosphoadenosine 5'-phosphosulfate synthase 2 (Papss2) from Mus musculus (Mouse).